The sequence spans 153 residues: Lectin-like protein EP153R (153 aa).

Residues M1–Y30 are Cytoplasmic-facing. The helical transmembrane segment at I31–W51 threads the bilayer. Over D52 to K153 the chain is Extracellular. Cysteines 67 and 78 form a disulfide. Residues N83, N89, N101, N107, N113, N120, N127, and N143 are each glycosylated (N-linked (GlcNAc...) asparagine; by host). C97 and C151 are joined by a disulfide.

It belongs to the asfivirus lectin-like protein family. In terms of assembly, homodimer.

The protein resides in the host endoplasmic reticulum membrane. Functionally, down-regulates MHC-I expression by impairing the appropriate configuration or presentation into the plasma membrane of the latter. Participates in viral hemadsorption, which may help viral spread. Reduces the transactivating activity of host TP53, thus inhibiting apoptosis. Non-essential for virus growth in swine macrophage cell cultures. This African swine fever virus (strain Badajoz 1971 Vero-adapted) (Ba71V) protein is Lectin-like protein EP153R.